Reading from the N-terminus, the 430-residue chain is MTNVVVVGAQWGDEGKGKIVDWLSEQADIVVRFQGGHNAGHTLVIDGNTYKLALLPSGVVRSSKLSVIGNGVVFDPQAFVNEVEKLKEQGVKVGPDNLRVAENVTLILPLHRELDSLRENASAATAIGTTQRGIGPAYEDKVGRRAIRLMDLADPQTLPHKIERLLAHHNALRRGHGIAEVDSGALLRDLAAIAPRVLPYADSVWNLLDHKRREGKRILFEGAQGALLDVDHGTYPYVTSSNTVAAQAATGTGMGPSALGYVLGICKAYTTRVGQGPFPTELNDEIGELIGQRGKEFGVNTGRKRRCGWFDAMLVRQTVRTSGIHGLALTKLDILDGFDTIQVCTGYRLDGKEIDHLPAGEGAQARIEPVYETVEGWKEPTANARSWADLPAQAIKYVRRIEELVGCPVALLSTSPEREDTILVQNPFEA.

Residues 12–18 and 40–42 each bind GTP; these read GDEGKGK and GHT. Residue aspartate 13 is the Proton acceptor of the active site. Aspartate 13 and glycine 40 together coordinate Mg(2+). IMP-binding positions include 13-16, 38-41, threonine 130, arginine 144, glutamine 224, threonine 239, and arginine 303; these read DEGK and NAGH. Histidine 41 acts as the Proton donor in catalysis. Substrate is bound at residue 299-305; that stretch reads VNTGRKR. GTP-binding positions include arginine 305, 331 to 333, and 413 to 415; these read KLD and STS.

Belongs to the adenylosuccinate synthetase family. In terms of assembly, homodimer. Mg(2+) is required as a cofactor.

Its subcellular location is the cytoplasm. It carries out the reaction IMP + L-aspartate + GTP = N(6)-(1,2-dicarboxyethyl)-AMP + GDP + phosphate + 2 H(+). It participates in purine metabolism; AMP biosynthesis via de novo pathway; AMP from IMP: step 1/2. In terms of biological role, plays an important role in the de novo pathway of purine nucleotide biosynthesis. Catalyzes the first committed step in the biosynthesis of AMP from IMP. The polypeptide is Adenylosuccinate synthetase (Nitrobacter winogradskyi (strain ATCC 25391 / DSM 10237 / CIP 104748 / NCIMB 11846 / Nb-255)).